The primary structure comprises 164 residues: Crossover junction endodeoxyribonuclease RuvC (164 aa).

Residues Asp7, Glu67, and Asp140 contribute to the active site. Mg(2+) is bound by residues Asp7, Glu67, and Asp140.

Belongs to the RuvC family. As to quaternary structure, homodimer which binds Holliday junction (HJ) DNA. The HJ becomes 2-fold symmetrical on binding to RuvC with unstacked arms; it has a different conformation from HJ DNA in complex with RuvA. In the full resolvosome a probable DNA-RuvA(4)-RuvB(12)-RuvC(2) complex forms which resolves the HJ. Mg(2+) is required as a cofactor.

Its subcellular location is the cytoplasm. The enzyme catalyses Endonucleolytic cleavage at a junction such as a reciprocal single-stranded crossover between two homologous DNA duplexes (Holliday junction).. In terms of biological role, the RuvA-RuvB-RuvC complex processes Holliday junction (HJ) DNA during genetic recombination and DNA repair. Endonuclease that resolves HJ intermediates. Cleaves cruciform DNA by making single-stranded nicks across the HJ at symmetrical positions within the homologous arms, yielding a 5'-phosphate and a 3'-hydroxyl group; requires a central core of homology in the junction. The consensus cleavage sequence is 5'-(A/T)TT(C/G)-3'. Cleavage occurs on the 3'-side of the TT dinucleotide at the point of strand exchange. HJ branch migration catalyzed by RuvA-RuvB allows RuvC to scan DNA until it finds its consensus sequence, where it cleaves and resolves the cruciform DNA. The sequence is that of Crossover junction endodeoxyribonuclease RuvC from Alkaliphilus metalliredigens (strain QYMF).